A 641-amino-acid polypeptide reads, in one-letter code: 1-deoxy-D-xylulose-5-phosphate synthase (641 aa).

Residues H79 and 120–122 (AHS) contribute to the thiamine diphosphate site. D151 serves as a coordination point for Mg(2+). Residues 152 to 153 (GA), N180, Y290, and E372 each bind thiamine diphosphate. N180 contacts Mg(2+).

This sequence belongs to the transketolase family. DXPS subfamily. In terms of assembly, homodimer. Requires Mg(2+) as cofactor. The cofactor is thiamine diphosphate.

It catalyses the reaction D-glyceraldehyde 3-phosphate + pyruvate + H(+) = 1-deoxy-D-xylulose 5-phosphate + CO2. The protein operates within metabolic intermediate biosynthesis; 1-deoxy-D-xylulose 5-phosphate biosynthesis; 1-deoxy-D-xylulose 5-phosphate from D-glyceraldehyde 3-phosphate and pyruvate: step 1/1. In terms of biological role, catalyzes the acyloin condensation reaction between C atoms 2 and 3 of pyruvate and glyceraldehyde 3-phosphate to yield 1-deoxy-D-xylulose-5-phosphate (DXP). The sequence is that of 1-deoxy-D-xylulose-5-phosphate synthase from Bradyrhizobium sp. (strain ORS 278).